A 217-amino-acid polypeptide reads, in one-letter code: Small ribosomal subunit protein uS3c (217 aa).

One can recognise a KH type-2 domain in the interval 47 to 119 (VRTHIKSSSN…KLHIAIEKVA (73 aa)).

This sequence belongs to the universal ribosomal protein uS3 family. Part of the 30S ribosomal subunit.

The protein localises to the plastid. The protein resides in the chloroplast. This chain is Small ribosomal subunit protein uS3c (rps3), found in Pinus thunbergii (Japanese black pine).